A 361-amino-acid polypeptide reads, in one-letter code: 3-dehydroquinate synthase (361 aa).

It belongs to the archaeal-type DHQ synthase family.

The enzyme catalyses 2-amino-2,3,7-trideoxy-D-lyxo-hept-6-ulosonate + NAD(+) + H2O = 3-dehydroquinate + NH4(+) + NADH + H(+). Functionally, catalyzes the oxidative deamination and cyclization of 2-amino-3,7-dideoxy-D-threo-hept-6-ulosonic acid (ADH) to yield 3-dehydroquinate (DHQ), which is fed into the canonical shikimic pathway of aromatic amino acid biosynthesis. The polypeptide is 3-dehydroquinate synthase (Methanococcus vannielii (strain ATCC 35089 / DSM 1224 / JCM 13029 / OCM 148 / SB)).